The primary structure comprises 245 residues: Carboxy-S-adenosyl-L-methionine synthase (245 aa).

S-adenosyl-L-methionine contacts are provided by residues Tyr42, 67–69 (GCS), 92–93 (DN), 120–121 (DI), Asn135, and Arg202.

Belongs to the class I-like SAM-binding methyltransferase superfamily. Cx-SAM synthase family. Homodimer.

It carries out the reaction prephenate + S-adenosyl-L-methionine = carboxy-S-adenosyl-L-methionine + 3-phenylpyruvate + H2O. Its function is as follows. Catalyzes the conversion of S-adenosyl-L-methionine (SAM) to carboxy-S-adenosyl-L-methionine (Cx-SAM). The chain is Carboxy-S-adenosyl-L-methionine synthase from Vibrio campbellii (strain ATCC BAA-1116).